The sequence spans 187 residues: Small ribosomal subunit protein uS5 (187 aa).

The region spanning 20–83 (FADRLVAINR…EQAKRQMIRV (64 aa)) is the S5 DRBM domain. The tract at residues 155–187 (KKEQSPRSVAQRRGKKVADILPKRDEAPAEAEA) is disordered. Residues 170–181 (KVADILPKRDEA) show a composition bias toward basic and acidic residues.

The protein belongs to the universal ribosomal protein uS5 family. As to quaternary structure, part of the 30S ribosomal subunit. Contacts proteins S4 and S8.

With S4 and S12 plays an important role in translational accuracy. Functionally, located at the back of the 30S subunit body where it stabilizes the conformation of the head with respect to the body. This is Small ribosomal subunit protein uS5 from Ruegeria sp. (strain TM1040) (Silicibacter sp.).